The primary structure comprises 455 residues: Bifunctional protein GlmU (455 aa).

The interval 1–227 is pyrophosphorylase; it reads MGLSVIILAA…CEEVQGVNDR (227 aa). Residues 8 to 11, K22, Q73, 78 to 79, 100 to 102, G137, E152, N167, and N225 contribute to the UDP-N-acetyl-alpha-D-glucosamine site; these read LAAG, GT, and YGD. A Mg(2+)-binding site is contributed by D102. Position 225 (N225) interacts with Mg(2+). Positions 228–248 are linker; it reads WELTKLERYYQRLMAKKLSLA. The segment at 249–455 is N-acetyltransferase; it reads GVTIIDPERF…KGWHRPTKKE (207 aa). Residues R332 and K350 each coordinate UDP-N-acetyl-alpha-D-glucosamine. Residue H362 is the Proton acceptor of the active site. 2 residues coordinate UDP-N-acetyl-alpha-D-glucosamine: Y365 and N376. Residues A379, 385-386, S404, A422, and R439 contribute to the acetyl-CoA site; that span reads NY.

It in the N-terminal section; belongs to the N-acetylglucosamine-1-phosphate uridyltransferase family. In the C-terminal section; belongs to the transferase hexapeptide repeat family. In terms of assembly, homotrimer. Mg(2+) serves as cofactor.

The protein resides in the cytoplasm. The enzyme catalyses alpha-D-glucosamine 1-phosphate + acetyl-CoA = N-acetyl-alpha-D-glucosamine 1-phosphate + CoA + H(+). It catalyses the reaction N-acetyl-alpha-D-glucosamine 1-phosphate + UTP + H(+) = UDP-N-acetyl-alpha-D-glucosamine + diphosphate. It participates in nucleotide-sugar biosynthesis; UDP-N-acetyl-alpha-D-glucosamine biosynthesis; N-acetyl-alpha-D-glucosamine 1-phosphate from alpha-D-glucosamine 6-phosphate (route II): step 2/2. Its pathway is nucleotide-sugar biosynthesis; UDP-N-acetyl-alpha-D-glucosamine biosynthesis; UDP-N-acetyl-alpha-D-glucosamine from N-acetyl-alpha-D-glucosamine 1-phosphate: step 1/1. It functions in the pathway bacterial outer membrane biogenesis; LPS lipid A biosynthesis. Catalyzes the last two sequential reactions in the de novo biosynthetic pathway for UDP-N-acetylglucosamine (UDP-GlcNAc). The C-terminal domain catalyzes the transfer of acetyl group from acetyl coenzyme A to glucosamine-1-phosphate (GlcN-1-P) to produce N-acetylglucosamine-1-phosphate (GlcNAc-1-P), which is converted into UDP-GlcNAc by the transfer of uridine 5-monophosphate (from uridine 5-triphosphate), a reaction catalyzed by the N-terminal domain. This is Bifunctional protein GlmU from Coxiella burnetii (strain CbuG_Q212) (Coxiella burnetii (strain Q212)).